Here is a 267-residue protein sequence, read N- to C-terminus: Ribosomal RNA small subunit methyltransferase J (267 aa).

S-adenosyl-L-methionine-binding positions include Glu-133–Arg-134 and Asp-187.

It belongs to the methyltransferase superfamily. RsmJ family.

It localises to the cytoplasm. It catalyses the reaction guanosine(1516) in 16S rRNA + S-adenosyl-L-methionine = N(2)-methylguanosine(1516) in 16S rRNA + S-adenosyl-L-homocysteine + H(+). Its function is as follows. Specifically methylates the guanosine in position 1516 of 16S rRNA. This chain is Ribosomal RNA small subunit methyltransferase J, found in Halorhodospira halophila (strain DSM 244 / SL1) (Ectothiorhodospira halophila (strain DSM 244 / SL1)).